The primary structure comprises 186 residues: Peptidyl-tRNA hydrolase (186 aa).

Position 14 (Y14) interacts with tRNA. H19 functions as the Proton acceptor in the catalytic mechanism. F64, N66, and N112 together coordinate tRNA.

It belongs to the PTH family. As to quaternary structure, monomer.

Its subcellular location is the cytoplasm. The enzyme catalyses an N-acyl-L-alpha-aminoacyl-tRNA + H2O = an N-acyl-L-amino acid + a tRNA + H(+). Functionally, hydrolyzes ribosome-free peptidyl-tRNAs (with 1 or more amino acids incorporated), which drop off the ribosome during protein synthesis, or as a result of ribosome stalling. Its function is as follows. Catalyzes the release of premature peptidyl moieties from peptidyl-tRNA molecules trapped in stalled 50S ribosomal subunits, and thus maintains levels of free tRNAs and 50S ribosomes. This chain is Peptidyl-tRNA hydrolase, found in Listeria monocytogenes serotype 4b (strain CLIP80459).